The following is a 1501-amino-acid chain: Neither inactivation nor afterpotential protein C (1501 aa).

The Protein kinase domain maps to 16-282 (FEIYEEIAQG…MVEMVEHPFL (267 aa)). ATP-binding positions include 22-30 (IAQGVNAKV) and K45. Catalysis depends on D145, which acts as the Proton acceptor. At S183 the chain carries Phosphoserine. Residues 332 to 1037 (MYPEDLAALE…FLARLYELQV (706 aa)) enclose the Myosin motor domain. The interval 913–934 (LTLLKMLSQNANLGVHFVRCIR) is actin-binding. IQ domains lie at 1036 to 1065 (QVKK…FKLG) and 1072 to 1101 (HDVA…EKSG). Residues 1043 to 1271 (VQSMMRALLA…RMGESDNIYN (229 aa)) form an interaction with rtp region. Residues 1066-1501 (KKGPEHHDVA…ITLSGYAVDI (436 aa)) are non alpha-helical, C-terminal domain. 2 disordered regions span residues 1308-1364 (NWGV…DPVR) and 1390-1473 (KTNY…EDSN). Positions 1326–1335 (APPPPPPPMP) are enriched in pro residues. A compositionally biased stretch (low complexity) spans 1336–1358 (SSNYYRNNPNQQQRNYQQRSSYP). Over residues 1405 to 1414 (NNRRGSDSGD) the composition is skewed to basic and acidic residues. Polar residues predominate over residues 1449–1463 (FGQQQRAPTLRQSPA).

In the C-terminal section; belongs to the TRAFAC class myosin-kinesin ATPase superfamily. Myosin family. This sequence in the N-terminal section; belongs to the protein kinase superfamily. Ser/Thr protein kinase family. Interacts with rtp. As to expression, expressed in the phototransducing compartment of photoreceptor cells, the rhabdomeres (at protein level).

It localises to the cytoplasm. The protein localises to the cytoskeleton. Its subcellular location is the nucleus. It is found in the membrane. The protein resides in the cell projection. It localises to the rhabdomere membrane. It carries out the reaction L-seryl-[protein] + ATP = O-phospho-L-seryl-[protein] + ADP + H(+). It catalyses the reaction L-threonyl-[protein] + ATP = O-phospho-L-threonyl-[protein] + ADP + H(+). In terms of biological role, required for photoreceptor cell function. The ninaC proteins combines putative serine/threonine-protein kinase and myosin activities. Essential for the expression and stability of the rtp protein in the photoreceptors. The rtp/ninaC complex is required for stability of inad and inac and the normal termination of phototransduction in the retina. The chain is Neither inactivation nor afterpotential protein C (ninaC) from Drosophila melanogaster (Fruit fly).